A 410-amino-acid chain; its full sequence is Lissencephaly-1 homolog B (410 aa).

Residues 7–39 (QRDELNRAIADYLRSNGYEEAYSTFKKEAELDV) enclose the LisH domain. Residues 56 to 82 (TSVIRLQKKVMELESKLNEAKEEITLG) adopt a coiled-coil conformation. 7 WD repeats span residues 106–147 (GHRS…RTLK), 148–187 (GHTDSVQDISFDQTGKLLASCSADMTIKLWDFQGFECIRT), 190–229 (GHDHNVSSVAIMPNGDHIVSASRDKTMKMWEVATGYCVKT), 232–271 (GHREWVRMVRPNQDGTLLASCSNDQTVRVWVVATKECKAE), 274–333 (EHEH…CLMT), 336–377 (GHDN…KTLS), and 379–410 (HEHFVTSLDFHKASPYVVTGSVDQTVKVWECR).

The protein belongs to the WD repeat LIS1/nudF family. As to quaternary structure, can self-associate. Component of the cytosolic PAF-AH (I) heterotetrameric enzyme, which is composed of PAFAH1B1 (beta), PAFAH1B2 (alpha2) and PAFAH1B3 (alpha1) subunits. The catalytic activity of the enzyme resides in the alpha1 (PAFAH1B3) and alpha2 (PAFAH1B2) subunits, whereas the beta subunit (PAFAH1B1) has regulatory activity. Trimer formation is not essential for the catalytic activity. Interacts with dynein, dynactin, nde1 and ndel1. Enriched in the photoreceptor cell layer.

The protein localises to the cytoplasm. It is found in the cytoskeleton. It localises to the microtubule organizing center. The protein resides in the centrosome. Its function is as follows. Regulatory subunit (beta subunit) of the cytosolic type I platelet-activating factor (PAF) acetylhydrolase (PAF-AH (I)), an enzyme that catalyzes the hydrolyze of the acetyl group at the sn-2 position of PAF and its analogs and participates in the PAF inactivation. Regulates the PAF-AH (I) activity in a catalytic dimer composition-dependent manner. Positively regulates the activity of the minus-end directed microtubule motor protein dynein. May enhance dynein-mediated microtubule sliding by targeting dynein to the microtubule plus end. Required for several dynein- and microtubule-dependent processes such as the maintenance of Golgi integrity, the peripheral transport of microtubule fragments and the coupling of the nucleus and centrosome. May be required for proliferation of neuronal precursors and neuronal migration. Involved in the positioning of nuclei in photoreceptor cells. The polypeptide is Lissencephaly-1 homolog B (pafah1b1b) (Danio rerio (Zebrafish)).